A 343-amino-acid chain; its full sequence is UDP-3-O-acylglucosamine N-acyltransferase (343 aa).

Histidine 238 (proton acceptor) is an active-site residue.

This sequence belongs to the transferase hexapeptide repeat family. LpxD subfamily. As to quaternary structure, homotrimer.

It catalyses the reaction a UDP-3-O-[(3R)-3-hydroxyacyl]-alpha-D-glucosamine + a (3R)-hydroxyacyl-[ACP] = a UDP-2-N,3-O-bis[(3R)-3-hydroxyacyl]-alpha-D-glucosamine + holo-[ACP] + H(+). It functions in the pathway bacterial outer membrane biogenesis; LPS lipid A biosynthesis. Its function is as follows. Catalyzes the N-acylation of UDP-3-O-acylglucosamine using 3-hydroxyacyl-ACP as the acyl donor. Is involved in the biosynthesis of lipid A, a phosphorylated glycolipid that anchors the lipopolysaccharide to the outer membrane of the cell. The chain is UDP-3-O-acylglucosamine N-acyltransferase from Marinomonas sp. (strain MWYL1).